Consider the following 252-residue polypeptide: Putative pinene synthase (252 aa).

This sequence belongs to the terpene synthase family. Tpsa subfamily.

The polypeptide is Putative pinene synthase (Fragaria ananassa (Strawberry)).